A 72-amino-acid polypeptide reads, in one-letter code: Translation initiation factor IF-1 (72 aa).

Residues 1–72 (MAKEDVIEIE…TRGRITYRFK (72 aa)) enclose the S1-like domain.

This sequence belongs to the IF-1 family. Component of the 30S ribosomal translation pre-initiation complex which assembles on the 30S ribosome in the order IF-2 and IF-3, IF-1 and N-formylmethionyl-tRNA(fMet); mRNA recruitment can occur at any time during PIC assembly.

Its subcellular location is the cytoplasm. Functionally, one of the essential components for the initiation of protein synthesis. Stabilizes the binding of IF-2 and IF-3 on the 30S subunit to which N-formylmethionyl-tRNA(fMet) subsequently binds. Helps modulate mRNA selection, yielding the 30S pre-initiation complex (PIC). Upon addition of the 50S ribosomal subunit IF-1, IF-2 and IF-3 are released leaving the mature 70S translation initiation complex. In Streptococcus mutans serotype c (strain ATCC 700610 / UA159), this protein is Translation initiation factor IF-1.